Reading from the N-terminus, the 895-residue chain is MPAIVEKVLRAGEGRVVKRLHRVAEQVNALESDFEAMNDEELRGETVRFRERLAAGETLDDLLPEAFAVVREAARRTLGQRHFDVQLMGGAALHQGNIAEMRTGEGKTLVATLPAYLNALSGKGVHVITVNDFLAEYQSELMGRVYRFLGLTSACILSRMRPDERREAYAADITYGTNNEFGFDYLRDNMAWSTAEMVQRGHNFAIVDEVDSILIDEARTPLIISGPSDSPTKWYGEFAKIARRLTVDVDYEVDEKKRTIGILEAGIEKVEDLLGIENLYESVNTPLIGFLNNAVKAKELFKRDKDYVVSPNDEVLIVDEHTGRILAGRRYNEGMHQAIEAKEGVPIQNENQTLATITLQNFFRMYDKLAGMTGTAMTEAAEFHQTYKLGVVPIPTNRPAVRVDQPDLVYKNEQAKFAAVVEDIAEHHAAGQPVLVGTTSVEKSEYLSTLLTKAGVEHTVLNAKQHEREASIVAMAGRKGAVTVATNMAGRGTDIILGGNAEFLAVQAMRDKGLDPDETPEDYEAAWPEVLEQAQASVKAEHDEVRDLGGLYVLGTERHESRRIDNQLRGRSGRQGDPGESRFYLSLTDDLMRLFNAALVESFLTRTGIPEDVPIESKMVSRAIQSAQGQVEGRNFEIRKNVLKYDDVLNRQREVIYAERRKVLEGEDLHLQIRHFIDDVVTAYVTEATARGFGEDWDLDELFEALRSLYPVSVTPEEVVEAAGGRGNLTVERLLEEMRADAQACYDAREQELGETVVRDLERRVVLSVLDRKWREHLYEMDYLQEGIGLRAMAQRDPLVEYQREGYQLFGAMTEAIKEESVGYLFSLQVQPAAQAGAAATPPGFGAPPVRQQLQYSAPTAEGDVEVHAGDAAATDADTGNRAQRRANQRQQREV.

Residues glutamine 86, 104–108, and aspartate 494 each bind ATP; that span reads GEGKT. Composition is skewed to low complexity over residues 838-849 and 870-882; these read AAATPPGFGAPP and GDAA…TGNR. The segment at 838–895 is disordered; the sequence is AAATPPGFGAPPVRQQLQYSAPTAEGDVEVHAGDAAATDADTGNRAQRRANQRQQREV.

This sequence belongs to the SecA family. Monomer and homodimer. Part of the essential Sec protein translocation apparatus which comprises SecA, SecYEG and auxiliary proteins SecDF. Other proteins may also be involved.

It is found in the cell membrane. It localises to the cytoplasm. The enzyme catalyses ATP + H2O + cellular proteinSide 1 = ADP + phosphate + cellular proteinSide 2.. Its function is as follows. Part of the Sec protein translocase complex. Interacts with the SecYEG preprotein conducting channel. Has a central role in coupling the hydrolysis of ATP to the transfer of proteins into and across the cell membrane, serving as an ATP-driven molecular motor driving the stepwise translocation of polypeptide chains across the membrane. The sequence is that of Protein translocase subunit SecA from Kineococcus radiotolerans (strain ATCC BAA-149 / DSM 14245 / SRS30216).